Reading from the N-terminus, the 514-residue chain is Pleiotropic regulator 1 (514 aa).

An N-acetylmethionine modification is found at M1. Position 119 is a phosphoserine (S119). Residues 135–160 form a disordered region; the sequence is KADANRTAPSGSEYRHPGASDRPQPT. S201 carries the post-translational modification Phosphoserine. WD repeat units lie at residues 202–241, 244–283, 286–325, 328–367, 370–410, 411–449, and 460–499; these read GHLG…LKLS, GHIS…VIRH, GHLS…SVHT, GHTN…TRVT, NHKK…QNLS, GHNA…NFQR, and DSES…TEET. S391 bears the Phosphoserine mark.

Belongs to the WD repeat PRL1/PRL2 family. As to quaternary structure, identified in the spliceosome C complex. Component of the PRP19-CDC5L splicing complex composed of a core complex comprising a homotetramer of PRPF19, CDC5L, PLRG1 and BCAS2, and at least three less stably associated proteins CTNNBL1, CWC15 and HSPA8. Interacts (via its WD40 repeat domain) directly with CDC5L (via its C-terminal); the interaction is required for mRNA splicing but not for spliceosome assembly. Component of the minor spliceosome, which splices U12-type introns. Within this complex, interacts with CRIPT. Also interacts directly in the complex with BCAS2 and PRPF19. Interacts with USB1.

The protein localises to the nucleus. Its subcellular location is the nucleus speckle. Its function is as follows. Involved in pre-mRNA splicing as component of the spliceosome. Component of the PRP19-CDC5L complex that forms an integral part of the spliceosome and is required for activating pre-mRNA splicing. As a component of the minor spliceosome, involved in the splicing of U12-type introns in pre-mRNAs. In Homo sapiens (Human), this protein is Pleiotropic regulator 1 (PLRG1).